A 392-amino-acid polypeptide reads, in one-letter code: CCA-adding enzyme (392 aa).

2 residues coordinate ATP: Ser-45 and Lys-48. CTP contacts are provided by Ser-45 and Lys-48. Mg(2+)-binding residues include Asp-55, Asp-57, and Glu-106. ATP contacts are provided by His-129, Lys-148, and Tyr-157. Residues His-129, Lys-148, and Tyr-157 each contribute to the CTP site.

This sequence belongs to the tRNA nucleotidyltransferase/poly(A) polymerase family. Archaeal CCA-adding enzyme subfamily. In terms of assembly, homodimer. It depends on Mg(2+) as a cofactor.

The catalysed reaction is a tRNA precursor + 2 CTP + ATP = a tRNA with a 3' CCA end + 3 diphosphate. The enzyme catalyses a tRNA with a 3' CCA end + 2 CTP + ATP = a tRNA with a 3' CCACCA end + 3 diphosphate. Catalyzes the addition and repair of the essential 3'-terminal CCA sequence in tRNAs without using a nucleic acid template. Adds these three nucleotides in the order of C, C, and A to the tRNA nucleotide-73, using CTP and ATP as substrates and producing inorganic pyrophosphate. tRNA 3'-terminal CCA addition is required both for tRNA processing and repair. Also involved in tRNA surveillance by mediating tandem CCA addition to generate a CCACCA at the 3' terminus of unstable tRNAs. While stable tRNAs receive only 3'-terminal CCA, unstable tRNAs are marked with CCACCA and rapidly degraded. The chain is CCA-adding enzyme from Nanoarchaeum equitans (strain Kin4-M).